Consider the following 507-residue polypeptide: Maturase K (507 aa).

It belongs to the intron maturase 2 family. MatK subfamily.

The protein resides in the plastid. Its subcellular location is the chloroplast. Its function is as follows. Usually encoded in the trnK tRNA gene intron. Probably assists in splicing its own and other chloroplast group II introns. The polypeptide is Maturase K (Lyonia lucida (Fetterbush)).